The sequence spans 74 residues: ATP synthase subunit c (74 aa).

The next 2 helical transmembrane spans lie at 8–28 (FIGVGCMAIGMLGAALGVSNI) and 52–72 (IGAGLAEAMGLFSFVIAMLLI).

It belongs to the ATPase C chain family. As to quaternary structure, F-type ATPases have 2 components, F(1) - the catalytic core - and F(0) - the membrane proton channel. F(1) has five subunits: alpha(3), beta(3), gamma(1), delta(1), epsilon(1). F(0) has three main subunits: a(1), b(2) and c(10-14). The alpha and beta chains form an alternating ring which encloses part of the gamma chain. F(1) is attached to F(0) by a central stalk formed by the gamma and epsilon chains, while a peripheral stalk is formed by the delta and b chains.

The protein resides in the cell inner membrane. Functionally, f(1)F(0) ATP synthase produces ATP from ADP in the presence of a proton or sodium gradient. F-type ATPases consist of two structural domains, F(1) containing the extramembraneous catalytic core and F(0) containing the membrane proton channel, linked together by a central stalk and a peripheral stalk. During catalysis, ATP synthesis in the catalytic domain of F(1) is coupled via a rotary mechanism of the central stalk subunits to proton translocation. In terms of biological role, key component of the F(0) channel; it plays a direct role in translocation across the membrane. A homomeric c-ring of between 10-14 subunits forms the central stalk rotor element with the F(1) delta and epsilon subunits. This chain is ATP synthase subunit c, found in Rickettsia bellii (strain RML369-C).